A 174-amino-acid polypeptide reads, in one-letter code: Ferredoxin-2, mitochondrial (174 aa).

Residues 1–43 (MAASMARGVSARVLLRAAGGSWGPRAGHAAVTSRTFGTTGERR) constitute a mitochondrion transit peptide. Positions 26 to 52 (AGHAAVTSRTFGTTGERRAGEEAADSP) are disordered. The 2Fe-2S ferredoxin-type domain maps to 59-161 (VNVVFVDRSG…GVEFALPKIT (103 aa)). 4 residues coordinate [2Fe-2S] cluster: Cys96, Cys102, Cys105, and Cys142.

Belongs to the adrenodoxin/putidaredoxin family. Component of the mitochondrial core iron-sulfur cluster (ISC) complex composed of NFS1, LYRM4, NDUFAB1, ISCU, FXN, and FDX2; this complex is a heterohexamer containing two copies of each monomer. Form a heterodimer complex with NFS1. Interacts (in both their reduced and oxidized states) with the cysteine desulfurase (NFS1:LYRM4) complex; this interaction stimulates cysteine desulfurase activity, and serves as a reductant for Fe-S cluster assembly. The cofactor is [2Fe-2S] cluster.

It localises to the mitochondrion. The protein localises to the mitochondrion matrix. Electron donor, of the core iron-sulfur cluster (ISC) assembly complex, that acts to reduce the persulfide into sulfide during [2Fe-2S] clusters assembly on the scaffolding protein ISCU. The core iron-sulfur cluster (ISC) assembly complex is involved in the de novo synthesis of a [2Fe-2S] cluster, the first step of the mitochondrial iron-sulfur protein biogenesis. This process is initiated by the cysteine desulfurase complex (NFS1:LYRM4:NDUFAB1) that produces persulfide which is delivered on the scaffold protein ISCU in a FXN-dependent manner. Then this complex is stabilized by FDX2 which provides reducing equivalents to accomplish the [2Fe-2S] cluster assembly. Finally, the [2Fe-2S] cluster is transferred from ISCU to chaperone proteins, including HSCB, HSPA9 and GLRX5. Essential for coenzyme Q biosynthesis: together with FDXR, transfers the electrons required for the hydroxylation reaction performed by COQ6. The protein is Ferredoxin-2, mitochondrial of Mus musculus (Mouse).